Reading from the N-terminus, the 371-residue chain is Putative glutamate--cysteine ligase 2 (371 aa).

This sequence belongs to the glutamate--cysteine ligase type 2 family. YbdK subfamily. In terms of assembly, homodimer.

The catalysed reaction is L-cysteine + L-glutamate + ATP = gamma-L-glutamyl-L-cysteine + ADP + phosphate + H(+). Functionally, ATP-dependent carboxylate-amine ligase which exhibits weak glutamate--cysteine ligase activity. This Klebsiella pneumoniae (strain 342) protein is Putative glutamate--cysteine ligase 2.